A 170-amino-acid chain; its full sequence is Crossover junction endodeoxyribonuclease RuvC (170 aa).

Catalysis depends on residues Asp-12, Glu-72, and Asp-144. Asp-12, Glu-72, and Asp-144 together coordinate Mg(2+).

It belongs to the RuvC family. In terms of assembly, homodimer which binds Holliday junction (HJ) DNA. The HJ becomes 2-fold symmetrical on binding to RuvC with unstacked arms; it has a different conformation from HJ DNA in complex with RuvA. In the full resolvosome a probable DNA-RuvA(4)-RuvB(12)-RuvC(2) complex forms which resolves the HJ. Requires Mg(2+) as cofactor.

Its subcellular location is the cytoplasm. The enzyme catalyses Endonucleolytic cleavage at a junction such as a reciprocal single-stranded crossover between two homologous DNA duplexes (Holliday junction).. The RuvA-RuvB-RuvC complex processes Holliday junction (HJ) DNA during genetic recombination and DNA repair. Endonuclease that resolves HJ intermediates. Cleaves cruciform DNA by making single-stranded nicks across the HJ at symmetrical positions within the homologous arms, yielding a 5'-phosphate and a 3'-hydroxyl group; requires a central core of homology in the junction. The consensus cleavage sequence is 5'-(A/T)TT(C/G)-3'. Cleavage occurs on the 3'-side of the TT dinucleotide at the point of strand exchange. HJ branch migration catalyzed by RuvA-RuvB allows RuvC to scan DNA until it finds its consensus sequence, where it cleaves and resolves the cruciform DNA. In Nitrobacter hamburgensis (strain DSM 10229 / NCIMB 13809 / X14), this protein is Crossover junction endodeoxyribonuclease RuvC.